Consider the following 99-residue polypeptide: UPF0235 protein Avin_03050 (99 aa).

The tract at residues 66–99 is disordered; that stretch reads VSLESGESNRQKRVRIRRPRQLPALPGLAPRPDA. A compositionally biased stretch (basic residues) spans 76–85; it reads QKRVRIRRPR.

Belongs to the UPF0235 family.

This is UPF0235 protein Avin_03050 from Azotobacter vinelandii (strain DJ / ATCC BAA-1303).